The primary structure comprises 163 residues: Nucleotide-binding protein APL_1231 (163 aa).

It belongs to the YajQ family.

Nucleotide-binding protein. The polypeptide is Nucleotide-binding protein APL_1231 (Actinobacillus pleuropneumoniae serotype 5b (strain L20)).